Consider the following 237-residue polypeptide: Ribosomal RNA large subunit methyltransferase E (237 aa).

The S-adenosyl-L-methionine site is built by Gly76, Trp78, Asp99, Asp115, and Asp139. Lys179 serves as the catalytic Proton acceptor.

This sequence belongs to the class I-like SAM-binding methyltransferase superfamily. RNA methyltransferase RlmE family.

It is found in the cytoplasm. It catalyses the reaction uridine(2552) in 23S rRNA + S-adenosyl-L-methionine = 2'-O-methyluridine(2552) in 23S rRNA + S-adenosyl-L-homocysteine + H(+). Functionally, specifically methylates the uridine in position 2552 of 23S rRNA at the 2'-O position of the ribose in the fully assembled 50S ribosomal subunit. The polypeptide is Ribosomal RNA large subunit methyltransferase E (Rhodopseudomonas palustris (strain ATCC BAA-98 / CGA009)).